A 417-amino-acid polypeptide reads, in one-letter code: Serine hydroxymethyltransferase 3 (417 aa).

(6S)-5,6,7,8-tetrahydrofolate contacts are provided by residues L121 and 125–127 (GHL). Position 229 is an N6-(pyridoxal phosphate)lysine (K229). 354–356 (SPF) contributes to the (6S)-5,6,7,8-tetrahydrofolate binding site.

Belongs to the SHMT family. In terms of assembly, homodimer. Pyridoxal 5'-phosphate is required as a cofactor.

The protein localises to the cytoplasm. It carries out the reaction (6R)-5,10-methylene-5,6,7,8-tetrahydrofolate + glycine + H2O = (6S)-5,6,7,8-tetrahydrofolate + L-serine. It participates in one-carbon metabolism; tetrahydrofolate interconversion. The protein operates within amino-acid biosynthesis; glycine biosynthesis; glycine from L-serine: step 1/1. In terms of biological role, catalyzes the reversible interconversion of serine and glycine with tetrahydrofolate (THF) serving as the one-carbon carrier. This reaction serves as the major source of one-carbon groups required for the biosynthesis of purines, thymidylate, methionine, and other important biomolecules. Also exhibits THF-independent aldolase activity toward beta-hydroxyamino acids, producing glycine and aldehydes, via a retro-aldol mechanism. This is Serine hydroxymethyltransferase 3 from Pseudomonas aeruginosa (strain ATCC 15692 / DSM 22644 / CIP 104116 / JCM 14847 / LMG 12228 / 1C / PRS 101 / PAO1).